A 370-amino-acid polypeptide reads, in one-letter code: 4-hydroxy-3-methylbut-2-en-1-yl diphosphate synthase (flavodoxin) (370 aa).

Residues cysteine 270, cysteine 273, cysteine 305, and glutamate 312 each coordinate [4Fe-4S] cluster.

The protein belongs to the IspG family. It depends on [4Fe-4S] cluster as a cofactor.

The catalysed reaction is (2E)-4-hydroxy-3-methylbut-2-enyl diphosphate + oxidized [flavodoxin] + H2O + 2 H(+) = 2-C-methyl-D-erythritol 2,4-cyclic diphosphate + reduced [flavodoxin]. Its pathway is isoprenoid biosynthesis; isopentenyl diphosphate biosynthesis via DXP pathway; isopentenyl diphosphate from 1-deoxy-D-xylulose 5-phosphate: step 5/6. In terms of biological role, converts 2C-methyl-D-erythritol 2,4-cyclodiphosphate (ME-2,4cPP) into 1-hydroxy-2-methyl-2-(E)-butenyl 4-diphosphate. The polypeptide is 4-hydroxy-3-methylbut-2-en-1-yl diphosphate synthase (flavodoxin) (Hamiltonella defensa subsp. Acyrthosiphon pisum (strain 5AT)).